Consider the following 297-residue polypeptide: Myoblast determination protein 1 homolog (297 aa).

A disordered region spans residues 52 to 76 (KPEEHPHHHGHHHGHPHEEEHVRAP). The bHLH domain occupies 101-152 (DRRKAATMRERRRLSKVNEAFETLKRCTSTNPNQRLPKVEILRNAIRYIESL). Disordered regions lie at residues 171 to 221 (SGES…GKSS) and 243 to 297 (CPIL…YQVL). Polar residues-rich tracts occupy residues 174 to 184 (SDASSPRSNCS) and 258 to 297 (CSPQ…YQVL).

In terms of assembly, efficient DNA binding requires dimerization with another bHLH protein. Seems to form active heterodimers with ITF-2.

The protein localises to the nucleus. Acts as a transcriptional activator that promotes transcription of muscle-specific target genes and plays a role in muscle differentiation. Induces fibroblasts to differentiate into myoblasts. Interacts with and is inhibited by the twist protein. This interaction probably involves the basic domains of both proteins. In Coturnix japonica (Japanese quail), this protein is Myoblast determination protein 1 homolog (MYOD1).